The chain runs to 472 residues: 3-isopropylmalate dehydratase large subunit (472 aa).

3 residues coordinate [4Fe-4S] cluster: Cys-353, Cys-414, and Cys-417.

It belongs to the aconitase/IPM isomerase family. LeuC type 1 subfamily. As to quaternary structure, heterodimer of LeuC and LeuD. It depends on [4Fe-4S] cluster as a cofactor.

The catalysed reaction is (2R,3S)-3-isopropylmalate = (2S)-2-isopropylmalate. It functions in the pathway amino-acid biosynthesis; L-leucine biosynthesis; L-leucine from 3-methyl-2-oxobutanoate: step 2/4. Functionally, catalyzes the isomerization between 2-isopropylmalate and 3-isopropylmalate, via the formation of 2-isopropylmaleate. The protein is 3-isopropylmalate dehydratase large subunit of Acinetobacter baumannii (strain ATCC 17978 / DSM 105126 / CIP 53.77 / LMG 1025 / NCDC KC755 / 5377).